A 508-amino-acid chain; its full sequence is MWELLAFLLLAIAYFFRPKVKCPGAKYPKSLPYLPLVGSLPFLPRHGHPHVNFFKLQKKYGPIYSLRMGTKTTVMVGHYQLAKEVLIKKGKEFSGRPQVATLNILSDNQKGVAFADHGAPWQLHRKLVRAAFALFKDGNQKLEKIICHETSLLCDLLATQNGQTIDLSSPLFLAVTNVICWICFNSSYMKGDPALETMQNYHKGILETLEKDNVVDIFPALKIFPNKSLEKMRHCVNIRNELLSKIFEKHKENFNSDSITSMLDLLIQAKKNSDNNNTGPDQDSKLLSDKHILATIGDIFGAGVETTTSVVKWIVAFLLHDPQLKKKIQEEIDQNVGFSRTPTLSDRNRLLLLEATIREVLRIRPVAPMLIPHKALVDSSIGEFAVDDGTNVIINLWALHHNEKEWHQPDRFMPERFLDPTGSQLISPSLSYLPFGAGPRSCIGELLARQELFLFTAWLLQRFNLEVPDDGQLPSLEGHPTAVFLIDSFKVKINVRQAWREAQAEGST.

Cysteine 442 contacts heme.

Belongs to the cytochrome P450 family. Requires heme as cofactor.

Its subcellular location is the endoplasmic reticulum membrane. The protein resides in the microsome membrane. The enzyme catalyses a C21-steroid + reduced [NADPH--hemoprotein reductase] + O2 = a 17alpha-hydroxy-C21-steroid + oxidized [NADPH--hemoprotein reductase] + H2O + H(+). It catalyses the reaction progesterone + reduced [NADPH--hemoprotein reductase] + O2 = 17alpha-hydroxyprogesterone + oxidized [NADPH--hemoprotein reductase] + H2O + H(+). The catalysed reaction is pregnenolone + reduced [NADPH--hemoprotein reductase] + O2 = 17alpha-hydroxypregnenolone + oxidized [NADPH--hemoprotein reductase] + H2O + H(+). It carries out the reaction 17alpha-hydroxyprogesterone + reduced [NADPH--hemoprotein reductase] + O2 = androst-4-ene-3,17-dione + acetate + oxidized [NADPH--hemoprotein reductase] + H2O + 2 H(+). The enzyme catalyses 17alpha-hydroxyprogesterone + reduced [NADPH--hemoprotein reductase] + O2 = 16alpha,17alpha-dihydroxyprogesterone + oxidized [NADPH--hemoprotein reductase] + H2O + H(+). It catalyses the reaction 16alpha,17alpha-dihydroxyprogesterone + reduced [NADPH--hemoprotein reductase] + O2 = 6beta,16alpha,17alpha-trihydroxyprogesterone + oxidized [NADPH--hemoprotein reductase] + H2O + H(+). The catalysed reaction is 17alpha-hydroxypregnenolone + reduced [NADPH--hemoprotein reductase] + O2 = 3beta-hydroxyandrost-5-en-17-one + acetate + oxidized [NADPH--hemoprotein reductase] + H2O + 2 H(+). It carries out the reaction 16alpha,17alpha-dihydroxypregnenolone + reduced [NADPH--hemoprotein reductase] + O2 = 3beta,16alpha-dihydroxy-androst-5-en-17-one + acetate + oxidized [NADPH--hemoprotein reductase] + H2O + 2 H(+). The enzyme catalyses 3beta-hydroxyandrost-5-en-17-one + reduced [NADPH--hemoprotein reductase] + O2 = 3beta,16alpha-dihydroxy-androst-5-en-17-one + oxidized [NADPH--hemoprotein reductase] + H2O + H(+). It catalyses the reaction androst-4-ene-3,17-dione + reduced [NADPH--hemoprotein reductase] + O2 = 16alpha-hydroxyandrost-4-ene-3,17-dione + oxidized [NADPH--hemoprotein reductase] + H2O + H(+). It participates in steroid hormone biosynthesis. It functions in the pathway steroid biosynthesis; glucocorticoid biosynthesis. Regulated predominantly by intracellular cAMP levels. The 17,20-lyase activity is stimulated by cytochrome b5, which acts as an allosteric effector increasing the Vmax of the lyase activity. Functionally, a cytochrome P450 monooxygenase involved in corticoid and androgen biosynthesis. Catalyzes 17-alpha hydroxylation of C21 steroids, which is common for both pathways. A second oxidative step, required only for androgen synthesis, involves an acyl-carbon cleavage. The 17-alpha hydroxy intermediates, as part of adrenal glucocorticoids biosynthesis pathway, are precursors of cortisol. Hydroxylates steroid hormones, pregnenolone and progesterone to form 17-alpha hydroxy metabolites, followed by the cleavage of the C17-C20 bond to form C19 steroids, dehydroepiandrosterone (DHEA) and androstenedione. Has 16-alpha hydroxylase activity. Catalyzes 16-alpha hydroxylation of 17-alpha hydroxy pregnenolone, followed by the cleavage of the C17-C20 bond to form 16-alpha-hydroxy DHEA. Also 16-alpha hydroxylates androgens, relevant for estriol synthesis. Mechanistically, uses molecular oxygen inserting one oxygen atom into a substrate, and reducing the second into a water molecule, with two electrons provided by NADPH via cytochrome P450 reductase (CPR; NADPH-ferrihemoprotein reductase). The sequence is that of Steroid 17-alpha-hydroxylase/17,20 lyase (CYP17A1) from Equus caballus (Horse).